The chain runs to 85 residues: UPF0335 protein BH15140 (85 aa).

Belongs to the UPF0335 family.

The protein is UPF0335 protein BH15140 of Bartonella henselae (strain ATCC 49882 / DSM 28221 / CCUG 30454 / Houston 1) (Rochalimaea henselae).